A 345-amino-acid polypeptide reads, in one-letter code: Putative F-box protein At3g17265 (345 aa).

Residues 1–46 enclose the F-box domain; that stretch reads MMFAYLPPDLESEILSRVPATFLKELQTTCKRWYALFRDPIFVKKN.

The polypeptide is Putative F-box protein At3g17265 (Arabidopsis thaliana (Mouse-ear cress)).